A 273-amino-acid chain; its full sequence is 3-methyl-2-oxobutanoate hydroxymethyltransferase (273 aa).

Mg(2+) contacts are provided by aspartate 53 and aspartate 92. 3-methyl-2-oxobutanoate-binding positions include 53-54, aspartate 92, and lysine 120; that span reads DS. Position 122 (glutamate 122) interacts with Mg(2+). Glutamate 189 functions as the Proton acceptor in the catalytic mechanism.

It belongs to the PanB family. As to quaternary structure, homodecamer; pentamer of dimers. It depends on Mg(2+) as a cofactor.

It is found in the cytoplasm. The enzyme catalyses 3-methyl-2-oxobutanoate + (6R)-5,10-methylene-5,6,7,8-tetrahydrofolate + H2O = 2-dehydropantoate + (6S)-5,6,7,8-tetrahydrofolate. The protein operates within cofactor biosynthesis; (R)-pantothenate biosynthesis; (R)-pantoate from 3-methyl-2-oxobutanoate: step 1/2. Catalyzes the reversible reaction in which hydroxymethyl group from 5,10-methylenetetrahydrofolate is transferred onto alpha-ketoisovalerate to form ketopantoate. The sequence is that of 3-methyl-2-oxobutanoate hydroxymethyltransferase from Cupriavidus taiwanensis (strain DSM 17343 / BCRC 17206 / CCUG 44338 / CIP 107171 / LMG 19424 / R1) (Ralstonia taiwanensis (strain LMG 19424)).